The following is a 471-amino-acid chain: UDP-glycosyltransferase CGT (471 aa).

The active-site Proton acceptor is the histidine 24. Histidine 24 contributes to the an anthocyanidin binding site. Aspartate 120 serves as the catalytic Charge relay. Threonine 143 contacts UDP-alpha-D-glucose. The segment at 280-281 (SR) is UDP. 7 residues coordinate UDP-alpha-D-glucose: valine 343, glutamine 345, histidine 360, tryptophan 363, asparagine 364, serine 365, and glutamate 368. Residue glycine 383 participates in an anthocyanidin binding. 2 residues coordinate UDP-alpha-D-glucose: aspartate 384 and glutamine 385.

Belongs to the UDP-glycosyltransferase family.

The catalysed reaction is a 3'-hydro-2'-hydroxy-beta-oxodihydrochalcone + UDP-alpha-D-glucose = a 3'-(beta-D-glucopyranosyl)-2'-hydroxy-beta-oxodihydrochalcone + UDP + H(+). Functionally, UDP-glucose-dependent glucosyltransferase catalyzing the c-glucosylation of 2-hydroxyflavanones. Acts preferentially on the dibenzoylmethane tautomers formed in equilibrium with 2-hydroxyflavanones. No activity with naringenin or naringenin chalcone. In Oryza sativa subsp. indica (Rice), this protein is UDP-glycosyltransferase CGT.